The sequence spans 238 residues: Pyridoxine 5'-phosphate synthase (238 aa).

Asparagine 7 is a binding site for 3-amino-2-oxopropyl phosphate. 9–10 (DH) lines the 1-deoxy-D-xylulose 5-phosphate pocket. A 3-amino-2-oxopropyl phosphate-binding site is contributed by arginine 18. Histidine 43 serves as the catalytic Proton acceptor. 2 residues coordinate 1-deoxy-D-xylulose 5-phosphate: arginine 45 and histidine 50. Residue glutamate 70 is the Proton acceptor of the active site. Position 100 (threonine 100) interacts with 1-deoxy-D-xylulose 5-phosphate. Histidine 190 acts as the Proton donor in catalysis. Residues glycine 191 and 212–213 (GH) each bind 3-amino-2-oxopropyl phosphate.

The protein belongs to the PNP synthase family. Homooctamer; tetramer of dimers.

It localises to the cytoplasm. It catalyses the reaction 3-amino-2-oxopropyl phosphate + 1-deoxy-D-xylulose 5-phosphate = pyridoxine 5'-phosphate + phosphate + 2 H2O + H(+). Its pathway is cofactor biosynthesis; pyridoxine 5'-phosphate biosynthesis; pyridoxine 5'-phosphate from D-erythrose 4-phosphate: step 5/5. Catalyzes the complicated ring closure reaction between the two acyclic compounds 1-deoxy-D-xylulose-5-phosphate (DXP) and 3-amino-2-oxopropyl phosphate (1-amino-acetone-3-phosphate or AAP) to form pyridoxine 5'-phosphate (PNP) and inorganic phosphate. This chain is Pyridoxine 5'-phosphate synthase, found in Prochlorococcus marinus (strain AS9601).